Reading from the N-terminus, the 647-residue chain is NADP-dependent malic enzyme, chloroplastic (647 aa).

Residues 1–61 constitute a chloroplast transit peptide; that stretch reads MMSLNSSSVV…VDGAVKDVNA (61 aa). The active-site Proton donor is the Y195. An NAD(+)-binding site is contributed by R248. K266 acts as the Proton acceptor in catalysis. A divalent metal cation contacts are provided by E338, D339, and D362. D362 is an NAD(+) binding site. An NADP(+)-binding site is contributed by 391 to 407; that stretch reads LFLGAGEAGTGIAELIA. N503 serves as a coordination point for NAD(+).

It belongs to the malic enzymes family. As to quaternary structure, homotetramer. The cofactor is Mg(2+). Requires Mn(2+) as cofactor.

Its subcellular location is the plastid. It localises to the chloroplast. The catalysed reaction is (S)-malate + NADP(+) = pyruvate + CO2 + NADPH. The enzyme catalyses oxaloacetate + H(+) = pyruvate + CO2. It functions in the pathway photosynthesis; C3 acid pathway. Its function is as follows. The chloroplastic ME isoform decarboxylates malate shuttled from neighboring mesophyll cells. The CO(2) released is then refixed by ribulose-bisphosphate carboxylase. This pathway eliminates the photorespiratory loss of CO(2) that occurs in most plants. The protein is NADP-dependent malic enzyme, chloroplastic (MODA) of Flaveria pringlei.